A 951-amino-acid chain; its full sequence is Coiled-coil and C2 domain-containing protein 1A (951 aa).

Disordered stretches follow at residues 80–139 (CMRD…LETT), 185–266 (AIDE…RQRD), 306–346 (VDLS…PPPR), and 437–491 (NQDE…TRAQ). Residues 84-104 (PDEDEEEGTDEDDLEADDDLL) show a composition bias toward acidic residues. Phosphothreonine occurs at positions 92, 204, and 206. The span at 201 to 210 (PASTPTYSPA) shows a compositional bias: low complexity. Phosphoserine; by CDK1 is present on serine 208. Serine 253 and serine 324 each carry phosphoserine. Residues 311 to 333 (LPPPPDQLPPDPPSPPSQPPTPA) show a composition bias toward pro residues. A coiled-coil region spans residues 346-392 (RTLLEALEQRMERYQVAAAQAKSKGDQRKARMHERIVKQYQDAIRAH). Serine 455 carries the phosphoserine modification. Low complexity predominate over residues 475–488 (SAPTAKAPPKATST). The stretch at 484–517 (KATSTRAQQQLAFLEGRKKQLLQAALRAKQKNDV) forms a coiled coil. The 135-residue stretch at 637–771 (RFEQRTFSVI…EIACEVREIL (135 aa)) folds into the C2 domain. A disordered region spans residues 818-841 (TQVAGPKGKAPPVPAPARESGNRS).

This sequence belongs to the CC2D1 family. In terms of processing, phosphorylation on Ser-208 by CDK1 promotes spindle pole localization and association with SCC1/RAD21.

The protein resides in the cytoplasm. It is found in the nucleus. The protein localises to the cytoskeleton. Its subcellular location is the microtubule organizing center. It localises to the centrosome. Its function is as follows. Transcription factor that binds specifically to the DRE (dual repressor element) and represses HTR1A gene transcription in neuronal cells. The combination of calcium and ATP specifically inactivates the binding with FRE. May play a role in the altered regulation of HTR1A associated with anxiety and major depression. Mediates HDAC-independent repression of HTR1A promoter in neuronal cell. Performs essential function in controlling functional maturation of synapses. Plays distinct roles depending on its localization. When cytoplasmic, acts as a scaffold protein in the PI3K/PDK1/AKT pathway. Repressor of HTR1A when nuclear. In the centrosome, regulates spindle pole localization of the cohesin subunit SCC1/RAD21, thereby mediating centriole cohesion during mitosis. In Homo sapiens (Human), this protein is Coiled-coil and C2 domain-containing protein 1A (CC2D1A).